Consider the following 488-residue polypeptide: UDP-N-acetylmuramate--L-alanine ligase (488 aa).

ATP is bound at residue 127 to 133 (GTHGKTT).

It belongs to the MurCDEF family.

Its subcellular location is the cytoplasm. It catalyses the reaction UDP-N-acetyl-alpha-D-muramate + L-alanine + ATP = UDP-N-acetyl-alpha-D-muramoyl-L-alanine + ADP + phosphate + H(+). Its pathway is cell wall biogenesis; peptidoglycan biosynthesis. Cell wall formation. This is UDP-N-acetylmuramate--L-alanine ligase from Shewanella putrefaciens (strain CN-32 / ATCC BAA-453).